The primary structure comprises 561 residues: Phosphoinositide phospholipase C 1 (561 aa).

In terms of domain architecture, EF-hand spans 21–54; that stretch reads EPPEEIKNLFHDYSQDDRMSADEMLRFVIQVQGE. Residues 105–249 enclose the PI-PLC X-box domain; sequence QDMNQPLSHY…LKNKILISTK (145 aa). Residues H120 and H166 contribute to the active site. The segment covering 256–266 has biased composition (polar residues); it reads QTQISKGSTTD. Positions 256–285 are disordered; the sequence is QTQISKGSTTDESTRAKKISDAEEQVQEED. A compositionally biased stretch (basic and acidic residues) spans 267-276; the sequence is ESTRAKKISD. Residues 294–410 form the PI-PLC Y-box domain; that stretch reads RDLISIHAGN…GYVKKPDVLL (117 aa). The region spanning 414-541 is the C2 domain; the sequence is PEGEIFDPCS…PGIRAVRLHD (128 aa). Residues D452, D458, D510, D512, and D518 each coordinate Ca(2+).

Requires Ca(2+) as cofactor. In terms of tissue distribution, expressed in stems, leaves, roots, flowers and siliques. Predominant in the vascular tissues of roots and leaves.

The protein localises to the cell membrane. It carries out the reaction a 1,2-diacyl-sn-glycero-3-phospho-(1D-myo-inositol-4,5-bisphosphate) + H2O = 1D-myo-inositol 1,4,5-trisphosphate + a 1,2-diacyl-sn-glycerol + H(+). In terms of biological role, the production of the second messenger molecules diacylglycerol (DAG) and inositol 1,4,5-trisphosphate (IP3) is mediated by activated phosphatidylinositol-specific phospholipase C enzymes. Required for secondary responses to abscisic acid signals. In Arabidopsis thaliana (Mouse-ear cress), this protein is Phosphoinositide phospholipase C 1 (PLC1).